The sequence spans 507 residues: ATP synthase subunit alpha, chloroplastic (507 aa).

ATP is bound at residue 170–177 (GDRQTGKT).

This sequence belongs to the ATPase alpha/beta chains family. In terms of assembly, F-type ATPases have 2 components, CF(1) - the catalytic core - and CF(0) - the membrane proton channel. CF(1) has five subunits: alpha(3), beta(3), gamma(1), delta(1), epsilon(1). CF(0) has four main subunits: a, b, b' and c.

The protein localises to the plastid. It localises to the chloroplast thylakoid membrane. The catalysed reaction is ATP + H2O + 4 H(+)(in) = ADP + phosphate + 5 H(+)(out). In terms of biological role, produces ATP from ADP in the presence of a proton gradient across the membrane. The alpha chain is a regulatory subunit. This chain is ATP synthase subunit alpha, chloroplastic, found in Manihot esculenta (Cassava).